We begin with the raw amino-acid sequence, 154 residues long: Myoglobin (154 aa).

Positions Glu-2–Lys-148 constitute a Globin domain. Residue His-65 coordinates nitrite. His-65 provides a ligand contact to O2. His-94 contributes to the heme b binding site.

It belongs to the globin family. As to quaternary structure, monomeric.

The protein localises to the cytoplasm. It is found in the sarcoplasm. The enzyme catalyses Fe(III)-heme b-[protein] + nitric oxide + H2O = Fe(II)-heme b-[protein] + nitrite + 2 H(+). The catalysed reaction is H2O2 + AH2 = A + 2 H2O. Monomeric heme protein which primary function is to store oxygen and facilitate its diffusion within muscle tissues. Reversibly binds oxygen through a pentacoordinated heme iron and enables its timely and efficient release as needed during periods of heightened demand. Depending on the oxidative conditions of tissues and cells, and in addition to its ability to bind oxygen, it also has a nitrite reductase activity whereby it regulates the production of bioactive nitric oxide. Under stress conditions, like hypoxia and anoxia, it also protects cells against reactive oxygen species thanks to its pseudoperoxidase activity. The chain is Myoglobin (MB) from Alligator mississippiensis (American alligator).